The following is a 450-amino-acid chain: 3-phosphoshikimate 1-carboxyvinyltransferase (450 aa).

The 3-phosphoshikimate site is built by lysine 28, serine 29, and arginine 33. A phosphoenolpyruvate-binding site is contributed by lysine 28. 2 residues coordinate phosphoenolpyruvate: glycine 100 and arginine 128. 4 residues coordinate 3-phosphoshikimate: serine 173, glutamine 175, aspartate 326, and lysine 353. A phosphoenolpyruvate-binding site is contributed by glutamine 175. Residue aspartate 326 is the Proton acceptor of the active site. Residues arginine 357 and arginine 402 each coordinate phosphoenolpyruvate.

Belongs to the EPSP synthase family. Monomer.

It localises to the cytoplasm. It catalyses the reaction 3-phosphoshikimate + phosphoenolpyruvate = 5-O-(1-carboxyvinyl)-3-phosphoshikimate + phosphate. The protein operates within metabolic intermediate biosynthesis; chorismate biosynthesis; chorismate from D-erythrose 4-phosphate and phosphoenolpyruvate: step 6/7. Functionally, catalyzes the transfer of the enolpyruvyl moiety of phosphoenolpyruvate (PEP) to the 5-hydroxyl of shikimate-3-phosphate (S3P) to produce enolpyruvyl shikimate-3-phosphate and inorganic phosphate. This is 3-phosphoshikimate 1-carboxyvinyltransferase from Brucella melitensis biotype 1 (strain ATCC 23456 / CCUG 17765 / NCTC 10094 / 16M).